Reading from the N-terminus, the 424-residue chain is 23S rRNA (uracil(1939)-C(5))-methyltransferase RlmD (424 aa).

The 56-residue stretch at 1-56 (MEKFPAVTVFDLDYQGRGVAKIDGQVVFIEGALPDETVTFCKTSAKKQFIEAVVDE) folds into the TRAM domain. [4Fe-4S] cluster-binding residues include Cys69, Cys75, Cys78, and Cys155. S-adenosyl-L-methionine-binding residues include Gln255, Phe284, Asn289, Glu305, Asp333, and Asp354. Cys380 (nucleophile) is an active-site residue.

The protein belongs to the class I-like SAM-binding methyltransferase superfamily. RNA M5U methyltransferase family. RlmD subfamily.

The enzyme catalyses uridine(1939) in 23S rRNA + S-adenosyl-L-methionine = 5-methyluridine(1939) in 23S rRNA + S-adenosyl-L-homocysteine + H(+). Its function is as follows. Catalyzes the formation of 5-methyl-uridine at position 1939 (m5U1939) in 23S rRNA. The chain is 23S rRNA (uracil(1939)-C(5))-methyltransferase RlmD from Dichelobacter nodosus (strain VCS1703A).